The primary structure comprises 103 residues: Pyrimidine/purine nucleoside phosphorylase (103 aa).

The protein belongs to the nucleoside phosphorylase PpnP family.

It catalyses the reaction a purine D-ribonucleoside + phosphate = a purine nucleobase + alpha-D-ribose 1-phosphate. The catalysed reaction is adenosine + phosphate = alpha-D-ribose 1-phosphate + adenine. It carries out the reaction cytidine + phosphate = cytosine + alpha-D-ribose 1-phosphate. The enzyme catalyses guanosine + phosphate = alpha-D-ribose 1-phosphate + guanine. It catalyses the reaction inosine + phosphate = alpha-D-ribose 1-phosphate + hypoxanthine. The catalysed reaction is thymidine + phosphate = 2-deoxy-alpha-D-ribose 1-phosphate + thymine. It carries out the reaction uridine + phosphate = alpha-D-ribose 1-phosphate + uracil. The enzyme catalyses xanthosine + phosphate = alpha-D-ribose 1-phosphate + xanthine. Functionally, catalyzes the phosphorolysis of diverse nucleosides, yielding D-ribose 1-phosphate and the respective free bases. Can use uridine, adenosine, guanosine, cytidine, thymidine, inosine and xanthosine as substrates. Also catalyzes the reverse reactions. This chain is Pyrimidine/purine nucleoside phosphorylase, found in Sulfurovum sp. (strain NBC37-1).